Reading from the N-terminus, the 230-residue chain is DNA mismatch repair protein MutH (230 aa).

This sequence belongs to the MutH family.

It is found in the cytoplasm. In terms of biological role, sequence-specific endonuclease that cleaves unmethylated GATC sequences. It is involved in DNA mismatch repair. This chain is DNA mismatch repair protein MutH, found in Enterobacter sp. (strain 638).